A 263-amino-acid chain; its full sequence is Ribonuclease HII (263 aa).

The 192-residue stretch at 71–262 (QAIAGIDEVG…VKSMCCDSTN (192 aa)) folds into the RNase H type-2 domain. A divalent metal cation is bound by residues aspartate 77, glutamate 78, and aspartate 172.

It belongs to the RNase HII family. It depends on Mn(2+) as a cofactor. The cofactor is Mg(2+).

Its subcellular location is the cytoplasm. It catalyses the reaction Endonucleolytic cleavage to 5'-phosphomonoester.. In terms of biological role, endonuclease that specifically degrades the RNA of RNA-DNA hybrids. This Streptococcus pyogenes serotype M5 (strain Manfredo) protein is Ribonuclease HII.